We begin with the raw amino-acid sequence, 292 residues long: Ribosomal protein L11 methyltransferase (292 aa).

The S-adenosyl-L-methionine site is built by Thr144, Gly165, Asp187, and Asn229.

Belongs to the methyltransferase superfamily. PrmA family.

It is found in the cytoplasm. The catalysed reaction is L-lysyl-[protein] + 3 S-adenosyl-L-methionine = N(6),N(6),N(6)-trimethyl-L-lysyl-[protein] + 3 S-adenosyl-L-homocysteine + 3 H(+). Functionally, methylates ribosomal protein L11. This Pseudomonas putida (strain W619) protein is Ribosomal protein L11 methyltransferase.